Consider the following 325-residue polypeptide: Probable isoaspartyl peptidase/L-asparaginase 2 (325 aa).

The active-site Nucleophile is the Thr195. Substrate contacts are provided by residues 223–226 and 245–248; these read RIGD and TGEG.

The protein belongs to the Ntn-hydrolase family. Heterotetramer of two alpha and two beta chains arranged as a dimer of alpha/beta heterodimers. Cleaved into an alpha and beta chain by autocatalysis; this activates the enzyme. The N-terminal residue of the beta subunit is responsible for the nucleophile hydrolase activity.

The catalysed reaction is Cleavage of a beta-linked Asp residue from the N-terminus of a polypeptide.. Functionally, acts in asparagine catabolism and also in the final steps of protein degradation via hydrolysis of a range of isoaspartyl dipeptides. This is Probable isoaspartyl peptidase/L-asparaginase 2 from Arabidopsis thaliana (Mouse-ear cress).